A 59-amino-acid chain; its full sequence is UPF0434 protein lpg1920 (59 aa).

This sequence belongs to the UPF0434 family.

The protein is UPF0434 protein lpg1920 of Legionella pneumophila subsp. pneumophila (strain Philadelphia 1 / ATCC 33152 / DSM 7513).